We begin with the raw amino-acid sequence, 502 residues long: ATP synthase subunit beta, chloroplastic (502 aa).

Serine 17 is subject to Phosphoserine. Residue 176–183 participates in ATP binding; that stretch reads GGAGVGKT.

The protein belongs to the ATPase alpha/beta chains family. F-type ATPases have 2 components, CF(1) - the catalytic core - and CF(0) - the membrane proton channel. CF(1) has five subunits: alpha(3), beta(3), gamma(1), delta(1), epsilon(1). CF(0) has four main subunits: a(1), b(1), b'(1) and c(9-12).

Its subcellular location is the plastid. The protein resides in the chloroplast thylakoid membrane. The catalysed reaction is ATP + H2O + 4 H(+)(in) = ADP + phosphate + 5 H(+)(out). In terms of biological role, produces ATP from ADP in the presence of a proton gradient across the membrane. The catalytic sites are hosted primarily by the beta subunits. The polypeptide is ATP synthase subunit beta, chloroplastic (Lepidium virginicum (Virginia pepperweed)).